The sequence spans 153 residues: Putative trans-acting regulator pXO2-62/BXB0076/GBAA_pXO2_0076 (153 aa).

This sequence belongs to the AtxA/AcpA family.

The protein is Putative trans-acting regulator pXO2-62/BXB0076/GBAA_pXO2_0076 of Bacillus anthracis.